Reading from the N-terminus, the 434-residue chain is Enolase (434 aa).

Q163 is a (2R)-2-phosphoglycerate binding site. The active-site Proton donor is the E205. Mg(2+) contacts are provided by D242, E291, and D318. (2R)-2-phosphoglycerate contacts are provided by K343, R372, S373, and K394. The active-site Proton acceptor is K343.

Belongs to the enolase family. Mg(2+) serves as cofactor.

It is found in the cytoplasm. The protein resides in the secreted. The protein localises to the cell surface. It catalyses the reaction (2R)-2-phosphoglycerate = phosphoenolpyruvate + H2O. It functions in the pathway carbohydrate degradation; glycolysis; pyruvate from D-glyceraldehyde 3-phosphate: step 4/5. Functionally, catalyzes the reversible conversion of 2-phosphoglycerate (2-PG) into phosphoenolpyruvate (PEP). It is essential for the degradation of carbohydrates via glycolysis. In Streptococcus thermophilus (strain CNRZ 1066), this protein is Enolase.